The primary structure comprises 171 residues: Auxin-responsive protein IAA33 (171 aa).

Composition is skewed to polar residues over residues methionine 1–serine 11 and aspartate 19–proline 32. Residues methionine 1–alanine 51 form a disordered region. The span at lysine 40 to serine 49 shows a compositional bias: low complexity. One can recognise a PB1 domain in the interval valine 72–glycine 162.

Belongs to the Aux/IAA family. In terms of assembly, homodimers and heterodimers.

The protein resides in the nucleus. Functionally, aux/IAA proteins are short-lived transcriptional factors that function as repressors of early auxin response genes at low auxin concentrations. Repression is thought to result from the interaction with auxin response factors (ARFs), proteins that bind to the auxin-responsive promoter element (AuxRE). Formation of heterodimers with ARF proteins may alter their ability to modulate early auxin response genes expression. The protein is Auxin-responsive protein IAA33 (IAA33) of Arabidopsis thaliana (Mouse-ear cress).